A 31-amino-acid chain; its full sequence is Cytochrome b6-f complex subunit 6 (31 aa).

A helical membrane pass occupies residues 4 to 24 (ITSYFGFLLAALTITSAIFIG).

This sequence belongs to the PetL family. As to quaternary structure, the 4 large subunits of the cytochrome b6-f complex are cytochrome b6, subunit IV (17 kDa polypeptide, PetD), cytochrome f and the Rieske protein, while the 4 small subunits are PetG, PetL, PetM and PetN. The complex functions as a dimer.

Its subcellular location is the plastid. It localises to the chloroplast thylakoid membrane. Functionally, component of the cytochrome b6-f complex, which mediates electron transfer between photosystem II (PSII) and photosystem I (PSI), cyclic electron flow around PSI, and state transitions. PetL is important for photoautotrophic growth as well as for electron transfer efficiency and stability of the cytochrome b6-f complex. This chain is Cytochrome b6-f complex subunit 6, found in Ficus carica (Common fig).